Reading from the N-terminus, the 181-residue chain is ATP synthase subunit delta (181 aa).

The protein belongs to the ATPase delta chain family. In terms of assembly, F-type ATPases have 2 components, F(1) - the catalytic core - and F(0) - the membrane proton channel. F(1) has five subunits: alpha(3), beta(3), gamma(1), delta(1), epsilon(1). F(0) has three main subunits: a(1), b(2) and c(10-14). The alpha and beta chains form an alternating ring which encloses part of the gamma chain. F(1) is attached to F(0) by a central stalk formed by the gamma and epsilon chains, while a peripheral stalk is formed by the delta and b chains.

The protein localises to the cell inner membrane. Functionally, f(1)F(0) ATP synthase produces ATP from ADP in the presence of a proton or sodium gradient. F-type ATPases consist of two structural domains, F(1) containing the extramembraneous catalytic core and F(0) containing the membrane proton channel, linked together by a central stalk and a peripheral stalk. During catalysis, ATP synthesis in the catalytic domain of F(1) is coupled via a rotary mechanism of the central stalk subunits to proton translocation. In terms of biological role, this protein is part of the stalk that links CF(0) to CF(1). It either transmits conformational changes from CF(0) to CF(1) or is implicated in proton conduction. The sequence is that of ATP synthase subunit delta from Protochlamydia amoebophila (strain UWE25).